Reading from the N-terminus, the 39-residue chain is Photosystem II reaction center protein I (39 aa).

Residues 6-26 (ISVYSVVFFFIGIFMFGFLAS) form a helical membrane-spanning segment.

This sequence belongs to the PsbI family. In terms of assembly, PSII is composed of 1 copy each of membrane proteins PsbA, PsbB, PsbC, PsbD, PsbE, PsbF, PsbH, PsbI, PsbJ, PsbK, PsbL, PsbM, PsbT, PsbX, PsbY, PsbZ, Psb30/Ycf12, peripheral proteins PsbO, CyanoQ (PsbQ), PsbU, PsbV and a large number of cofactors. It forms dimeric complexes.

The protein localises to the cellular thylakoid membrane. Its function is as follows. One of the components of the core complex of photosystem II (PSII), required for its stability and/or assembly. PSII is a light-driven water:plastoquinone oxidoreductase that uses light energy to abstract electrons from H(2)O, generating O(2) and a proton gradient subsequently used for ATP formation. It consists of a core antenna complex that captures photons, and an electron transfer chain that converts photonic excitation into a charge separation. This chain is Photosystem II reaction center protein I, found in Synechococcus sp. (strain RCC307).